A 73-amino-acid polypeptide reads, in one-letter code: Beta-defensin 39 (73 aa).

Positions 1 to 23 (MKISCFLLLVLSLSCFQINSVSG) are cleaved as a signal peptide. 3 cysteine pairs are disulfide-bonded: C29–C58, C36–C51, and C41–C59.

It belongs to the beta-defensin family.

The protein localises to the secreted. Functionally, has antibacterial activity. This is Beta-defensin 39 (Defb39) from Rattus norvegicus (Rat).